The sequence spans 211 residues: BAG family molecular chaperone regulator 2 (211 aa).

A2 carries the N-acetylalanine modification. Residues S20, S31, and S73 each carry the phosphoserine modification. Positions 20 to 61 (SMADRSSRLLESLDQLELRVEALREAATAVEQEKEVLLEMIH) form a coiled coil. The region spanning 109 to 189 (SLKHATRIID…NIENADKAIK (81 aa)) is the BAG domain.

In terms of assembly, binds to the ATPase domain of HSP/HSC70 chaperones. May interact with NWD1. Interacts with HSPA1A (via NBD), HSPA1B (via NBD) and HSPA8. May interact with DNJC9; the interaction seems to be histone-dependent.

In terms of biological role, co-chaperone for HSP70 and HSC70 chaperone proteins. Acts as a nucleotide-exchange factor (NEF) promoting the release of ADP from the HSP70 and HSC70 proteins thereby triggering client/substrate protein release. In Bos taurus (Bovine), this protein is BAG family molecular chaperone regulator 2.